The following is a 143-amino-acid chain: Holo-[acyl-carrier-protein] synthase (143 aa).

Asp8 and Glu62 together coordinate Mg(2+).

It belongs to the P-Pant transferase superfamily. AcpS family. The cofactor is Mg(2+).

The protein localises to the cytoplasm. It catalyses the reaction apo-[ACP] + CoA = holo-[ACP] + adenosine 3',5'-bisphosphate + H(+). In terms of biological role, transfers the 4'-phosphopantetheine moiety from coenzyme A to a Ser of acyl-carrier-protein. The sequence is that of Holo-[acyl-carrier-protein] synthase from Cupriavidus metallidurans (strain ATCC 43123 / DSM 2839 / NBRC 102507 / CH34) (Ralstonia metallidurans).